The following is a 342-amino-acid chain: Holliday junction branch migration complex subunit RuvB (342 aa).

The tract at residues 1–182 (MRIEALNTAP…FGINSRLDYY (182 aa)) is large ATPase domain (RuvB-L). ATP contacts are provided by residues isoleucine 21, arginine 22, glycine 63, lysine 66, threonine 67, threonine 68, 129 to 131 (EDY), arginine 172, tyrosine 182, and arginine 219. Threonine 67 is a Mg(2+) binding site. Positions 183 to 253 (SPELLQSIIV…VARRTLESLE (71 aa)) are small ATPAse domain (RuvB-S). The interval 256 to 342 (EGGLDDMDKK…DHGPLFDHNS (87 aa)) is head domain (RuvB-H). The DNA site is built by arginine 311 and arginine 316.

The protein belongs to the RuvB family. Homohexamer. Forms an RuvA(8)-RuvB(12)-Holliday junction (HJ) complex. HJ DNA is sandwiched between 2 RuvA tetramers; dsDNA enters through RuvA and exits via RuvB. An RuvB hexamer assembles on each DNA strand where it exits the tetramer. Each RuvB hexamer is contacted by two RuvA subunits (via domain III) on 2 adjacent RuvB subunits; this complex drives branch migration. In the full resolvosome a probable DNA-RuvA(4)-RuvB(12)-RuvC(2) complex forms which resolves the HJ.

It localises to the cytoplasm. The catalysed reaction is ATP + H2O = ADP + phosphate + H(+). Its function is as follows. The RuvA-RuvB-RuvC complex processes Holliday junction (HJ) DNA during genetic recombination and DNA repair, while the RuvA-RuvB complex plays an important role in the rescue of blocked DNA replication forks via replication fork reversal (RFR). RuvA specifically binds to HJ cruciform DNA, conferring on it an open structure. The RuvB hexamer acts as an ATP-dependent pump, pulling dsDNA into and through the RuvAB complex. RuvB forms 2 homohexamers on either side of HJ DNA bound by 1 or 2 RuvA tetramers; 4 subunits per hexamer contact DNA at a time. Coordinated motions by a converter formed by DNA-disengaged RuvB subunits stimulates ATP hydrolysis and nucleotide exchange. Immobilization of the converter enables RuvB to convert the ATP-contained energy into a lever motion, pulling 2 nucleotides of DNA out of the RuvA tetramer per ATP hydrolyzed, thus driving DNA branch migration. The RuvB motors rotate together with the DNA substrate, which together with the progressing nucleotide cycle form the mechanistic basis for DNA recombination by continuous HJ branch migration. Branch migration allows RuvC to scan DNA until it finds its consensus sequence, where it cleaves and resolves cruciform DNA. In Chlorobaculum parvum (strain DSM 263 / NCIMB 8327) (Chlorobium vibrioforme subsp. thiosulfatophilum), this protein is Holliday junction branch migration complex subunit RuvB.